The sequence spans 120 residues: uncharacterized protein (120 aa).

Its subcellular location is the mitochondrion. This is an uncharacterized protein from Arabidopsis thaliana (Mouse-ear cress).